Consider the following 139-residue polypeptide: NADPH-dependent 7-cyano-7-deazaguanine reductase (139 aa).

Catalysis depends on Cys-34, which acts as the Thioimide intermediate. Residue Asp-41 is the Proton donor of the active site. Substrate is bound by residues 56–58 (VEL) and 75–76 (HE).

This sequence belongs to the GTP cyclohydrolase I family. QueF type 1 subfamily.

It localises to the cytoplasm. It carries out the reaction 7-aminomethyl-7-carbaguanine + 2 NADP(+) = 7-cyano-7-deazaguanine + 2 NADPH + 3 H(+). The protein operates within tRNA modification; tRNA-queuosine biosynthesis. Its function is as follows. Catalyzes the NADPH-dependent reduction of 7-cyano-7-deazaguanine (preQ0) to 7-aminomethyl-7-deazaguanine (preQ1). In Methylobacillus flagellatus (strain ATCC 51484 / DSM 6875 / VKM B-1610 / KT), this protein is NADPH-dependent 7-cyano-7-deazaguanine reductase.